A 439-amino-acid chain; its full sequence is Proline--tRNA ligase (439 aa).

It belongs to the class-II aminoacyl-tRNA synthetase family. ProS type 2 subfamily. In terms of assembly, homodimer.

The protein resides in the cytoplasm. The catalysed reaction is tRNA(Pro) + L-proline + ATP = L-prolyl-tRNA(Pro) + AMP + diphosphate. Functionally, catalyzes the attachment of proline to tRNA(Pro) in a two-step reaction: proline is first activated by ATP to form Pro-AMP and then transferred to the acceptor end of tRNA(Pro). The sequence is that of Proline--tRNA ligase from Rhodopseudomonas palustris (strain BisB18).